The primary structure comprises 491 residues: UDP-N-acetylmuramate--L-alanine ligase (491 aa).

126 to 132 serves as a coordination point for ATP; sequence GTHGKTT.

Belongs to the MurCDEF family.

The protein localises to the cytoplasm. The enzyme catalyses UDP-N-acetyl-alpha-D-muramate + L-alanine + ATP = UDP-N-acetyl-alpha-D-muramoyl-L-alanine + ADP + phosphate + H(+). Its pathway is cell wall biogenesis; peptidoglycan biosynthesis. Functionally, cell wall formation. This chain is UDP-N-acetylmuramate--L-alanine ligase, found in Shigella flexneri serotype 5b (strain 8401).